The sequence spans 104 residues: UPF0134 protein MPN_104 (104 aa).

The protein belongs to the UPF0134 family.

This is UPF0134 protein MPN_104 from Mycoplasma pneumoniae (strain ATCC 29342 / M129 / Subtype 1) (Mycoplasmoides pneumoniae).